The sequence spans 327 residues: MEISMTSHINNAVETFRLEIETLEKLKNSIDENFEKACEIILENNRDKSRVIITGMGKSGHIGKKMAATFASTGTPAFFVHPGEAGHGDFGMITKNDVLIAISNSGTSSEIMGLLPMIKHLDIPIIAITSNPKSILARNSNVTLNLHVDKEACPLNLAPTSSTTATLVLGDALAIALLKAKNFSEKDFAFSHPNGALGRKLILKVENIMRKGNEIPIVKPTDNIRKAILEISDKGVGNTLVAENNTLLGIFTDGDLRRMFEAESFNSQRAISEVMTKNPKSISKEEMAITALEKMEKYEITSLAVVDNGHNILGIVTMHDLIKLELR.

One can recognise an SIS domain in the interval 41 to 183 (ILENNRDKSR…AIALLKAKNF (143 aa)). Residues 74 to 75 (GT), His81, His87, 113 to 122 (GLLPMIKHLD), 147 to 149 (HVD), Thr221, and Glu273 contribute to the substrate site. Residue His81 participates in Zn(2+) binding. The region spanning 209–268 (MRKGNEIPIVKPTDNIRKAILEISDKGVGNTLVAENNTLLGIFTDGDLRRMFEAESFNSQ) is the CBS 1 domain. Positions 275–327 (MTKNPKSISKEEMAITALEKMEKYEITSLAVVDNGHNILGIVTMHDLIKLELR) constitute a CBS 2 domain.

The protein belongs to the SIS family. GutQ/KpsF subfamily. Homotetramer.

It catalyses the reaction D-arabinose 5-phosphate = D-ribulose 5-phosphate. It participates in carbohydrate biosynthesis; 3-deoxy-D-manno-octulosonate biosynthesis; 3-deoxy-D-manno-octulosonate from D-ribulose 5-phosphate: step 1/3. It functions in the pathway bacterial outer membrane biogenesis; lipopolysaccharide biosynthesis. Inhibited by hydroxamates, mimicking the putative enediol reaction intermediate. Most potent inhibition, with an IC(50) of 0.7 uM, is obtained with the 4 carbon-based hydroxamate containing acetyl moieties. Functionally, involved in the biosynthesis of 3-deoxy-D-manno-octulosonate (KDO), a unique 8-carbon sugar component of lipopolysaccharides (LPSs). Catalyzes the reversible aldol-ketol isomerization between D-ribulose 5-phosphate (Ru5P) and D-arabinose 5-phosphate (A5P). The protein is Arabinose 5-phosphate isomerase KdsD (kdsD) of Francisella tularensis subsp. tularensis (strain SCHU S4 / Schu 4).